Here is a 286-residue protein sequence, read N- to C-terminus: Phosphatidylserine decarboxylase proenzyme (286 aa).

Active-site charge relay system; for autoendoproteolytic cleavage activity residues include D90, H147, and S252. The active-site Schiff-base intermediate with substrate; via pyruvic acid; for decarboxylase activity is S252. The residue at position 252 (S252) is a Pyruvic acid (Ser); by autocatalysis.

Belongs to the phosphatidylserine decarboxylase family. PSD-B subfamily. Prokaryotic type I sub-subfamily. As to quaternary structure, heterodimer of a large membrane-associated beta subunit and a small pyruvoyl-containing alpha subunit. Pyruvate serves as cofactor. In terms of processing, is synthesized initially as an inactive proenzyme. Formation of the active enzyme involves a self-maturation process in which the active site pyruvoyl group is generated from an internal serine residue via an autocatalytic post-translational modification. Two non-identical subunits are generated from the proenzyme in this reaction, and the pyruvate is formed at the N-terminus of the alpha chain, which is derived from the carboxyl end of the proenzyme. The autoendoproteolytic cleavage occurs by a canonical serine protease mechanism, in which the side chain hydroxyl group of the serine supplies its oxygen atom to form the C-terminus of the beta chain, while the remainder of the serine residue undergoes an oxidative deamination to produce ammonia and the pyruvoyl prosthetic group on the alpha chain. During this reaction, the Ser that is part of the protease active site of the proenzyme becomes the pyruvoyl prosthetic group, which constitutes an essential element of the active site of the mature decarboxylase.

It is found in the cell membrane. The catalysed reaction is a 1,2-diacyl-sn-glycero-3-phospho-L-serine + H(+) = a 1,2-diacyl-sn-glycero-3-phosphoethanolamine + CO2. Its pathway is phospholipid metabolism; phosphatidylethanolamine biosynthesis; phosphatidylethanolamine from CDP-diacylglycerol: step 2/2. Its function is as follows. Catalyzes the formation of phosphatidylethanolamine (PtdEtn) from phosphatidylserine (PtdSer). This is Phosphatidylserine decarboxylase proenzyme from Pseudomonas fluorescens (strain Pf0-1).